The chain runs to 282 residues: UDP-N-acetylenolpyruvoylglucosamine reductase (282 aa).

Residues 15–179 (IKSFAKYVYF…LSAEFEFEYK (165 aa)) form the FAD-binding PCMH-type domain. Arg-157 is an active-site residue. Ser-207 (proton donor) is an active-site residue. Glu-278 is a catalytic residue.

It belongs to the MurB family. The cofactor is FAD.

The protein resides in the cytoplasm. It carries out the reaction UDP-N-acetyl-alpha-D-muramate + NADP(+) = UDP-N-acetyl-3-O-(1-carboxyvinyl)-alpha-D-glucosamine + NADPH + H(+). It functions in the pathway cell wall biogenesis; peptidoglycan biosynthesis. In terms of biological role, cell wall formation. This chain is UDP-N-acetylenolpyruvoylglucosamine reductase, found in Francisella tularensis subsp. tularensis (strain SCHU S4 / Schu 4).